The sequence spans 288 residues: Probable endonuclease 4 (288 aa).

H75, H115, E153, D187, H190, H224, D237, H239, and E269 together coordinate Zn(2+).

It belongs to the AP endonuclease 2 family. It depends on Zn(2+) as a cofactor.

The enzyme catalyses Endonucleolytic cleavage to 5'-phosphooligonucleotide end-products.. In terms of biological role, endonuclease IV plays a role in DNA repair. It cleaves phosphodiester bonds at apurinic or apyrimidinic (AP) sites, generating a 3'-hydroxyl group and a 5'-terminal sugar phosphate. The chain is Probable endonuclease 4 from Chlamydia muridarum (strain MoPn / Nigg).